Reading from the N-terminus, the 529-residue chain is Chromosomal replication initiator protein DnaA (529 aa).

The tract at residues 1-72 is domain I, interacts with DnaA modulators; it reads MQDFWHAASA…SLACDYWEAT (72 aa). The domain II stretch occupies residues 72-192; that stretch reads TVDVQFVLDP…HVDDSVHERS (121 aa). A domain III, AAA+ region region spans residues 193-409; that stretch reads RLNQILTFDN…GALRKILAYS (217 aa). Residues Gly237, Gly239, Lys240, and Thr241 each coordinate ATP. The domain IV, binds dsDNA stretch occupies residues 410–529; sequence NFHGKEITIE…LHVLEQTLKG (120 aa).

It belongs to the DnaA family. In terms of assembly, oligomerizes as a right-handed, spiral filament on DNA at oriC.

The protein localises to the cytoplasm. Functionally, plays an essential role in the initiation and regulation of chromosomal replication. ATP-DnaA binds to the origin of replication (oriC) to initiate formation of the DNA replication initiation complex once per cell cycle. Binds the DnaA box (a 9 base pair repeat at the origin) and separates the double-stranded (ds)DNA. Forms a right-handed helical filament on oriC DNA; dsDNA binds to the exterior of the filament while single-stranded (ss)DNA is stabiized in the filament's interior. The ATP-DnaA-oriC complex binds and stabilizes one strand of the AT-rich DNA unwinding element (DUE), permitting loading of DNA polymerase. After initiation quickly degrades to an ADP-DnaA complex that is not apt for DNA replication. Binds acidic phospholipids. This is Chromosomal replication initiator protein DnaA from Ralstonia pickettii (strain 12J).